Here is a 259-residue protein sequence, read N- to C-terminus: Probable ATP-dependent transporter ycf16 (259 aa).

Residues 9–253 enclose the ABC transporter domain; it reads LEVKNLKAQV…EIKGYDWLNE (245 aa). 41–48 contacts ATP; sequence GPNGSGKS.

The protein belongs to the ABC transporter superfamily. Ycf16 family.

The protein localises to the plastid. The protein resides in the cyanelle. This is Probable ATP-dependent transporter ycf16 (ycf16) from Cyanophora paradoxa.